Consider the following 124-residue polypeptide: Small ribosomal subunit protein uS12 (124 aa).

Residue Asp89 is modified to 3-methylthioaspartic acid. The disordered stretch occupies residues 101 to 124 (TLDTSGVKDRRQSRSKYGAKAPKE).

This sequence belongs to the universal ribosomal protein uS12 family. As to quaternary structure, part of the 30S ribosomal subunit. Contacts proteins S8 and S17. May interact with IF1 in the 30S initiation complex.

Its function is as follows. With S4 and S5 plays an important role in translational accuracy. Interacts with and stabilizes bases of the 16S rRNA that are involved in tRNA selection in the A site and with the mRNA backbone. Located at the interface of the 30S and 50S subunits, it traverses the body of the 30S subunit contacting proteins on the other side and probably holding the rRNA structure together. The combined cluster of proteins S8, S12 and S17 appears to hold together the shoulder and platform of the 30S subunit. This chain is Small ribosomal subunit protein uS12, found in Synechococcus sp. (strain CC9902).